The sequence spans 504 residues: Protein anon-37Cs (504 aa).

As to expression, low levels seen in adult heads, thorax, abdomen and ovaries, high levels in testes.

It is found in the cytoplasm. In terms of biological role, has a non-vital function. The sequence is that of Protein anon-37Cs (anon-37Cs) from Drosophila melanogaster (Fruit fly).